The sequence spans 138 residues: Phosphoribosyl-AMP cyclohydrolase (138 aa).

Mg(2+) is bound at residue D86. C87 is a Zn(2+) binding site. Mg(2+) is bound by residues D88 and D90. Residues C104 and C111 each coordinate Zn(2+).

The protein belongs to the PRA-CH family. As to quaternary structure, homodimer. Requires Mg(2+) as cofactor. It depends on Zn(2+) as a cofactor.

Its subcellular location is the cytoplasm. The enzyme catalyses 1-(5-phospho-beta-D-ribosyl)-5'-AMP + H2O = 1-(5-phospho-beta-D-ribosyl)-5-[(5-phospho-beta-D-ribosylamino)methylideneamino]imidazole-4-carboxamide. Its pathway is amino-acid biosynthesis; L-histidine biosynthesis; L-histidine from 5-phospho-alpha-D-ribose 1-diphosphate: step 3/9. Its function is as follows. Catalyzes the hydrolysis of the adenine ring of phosphoribosyl-AMP. This is Phosphoribosyl-AMP cyclohydrolase from Marinobacter nauticus (strain ATCC 700491 / DSM 11845 / VT8) (Marinobacter aquaeolei).